We begin with the raw amino-acid sequence, 239 residues long: Small ribosomal subunit protein uS3 (239 aa).

One can recognise a KH type-2 domain in the interval 39 to 107; sequence VREFLRKKLA…ATSINIEEIR (69 aa). The tract at residues 215 to 239 is disordered; it reads TSNTNELSDEKRNRRKPRNANRRKE. Residues 227 to 239 are compositionally biased toward basic residues; the sequence is NRRKPRNANRRKE.

Belongs to the universal ribosomal protein uS3 family. In terms of assembly, part of the 30S ribosomal subunit. Forms a tight complex with proteins S10 and S14.

Its function is as follows. Binds the lower part of the 30S subunit head. Binds mRNA in the 70S ribosome, positioning it for translation. The protein is Small ribosomal subunit protein uS3 of Dichelobacter nodosus (strain VCS1703A).